A 329-amino-acid chain; its full sequence is MTLSIYDDIFKQFPTIDEWSEPNEKIILEPFTYLGIITAKELPSMLIKAFNYWYQVPPPVLDLILKVVGPFHAATLLIDDIQDDSELRGGIPVAHKVYGVAQTINSANYVYFEAYQNISKLTPYLKSPETTDLWSMFNDEILALHRGQGLELYWRDTFTCPTEEEYLRMVHNKTGGMFRVAIKLMKALSPVQSLPDYFPLVNIIGILVQIRDDLLNLSPAFTKHKGYCEDLSEGKFGFPLIHSIKADSSNTLLMDILKLRPKDVPTKRKALKYMNDQTKSLDYTFDVICKLEKTAKDELKKLGGNPELSSIFELIHLSSTPDIEEKYKS.

Residues D79 and D83 each coordinate Mg(2+).

It belongs to the FPP/GGPP synthase family. Requires Mg(2+) as cofactor.

The catalysed reaction is (2E)-geranyl diphosphate + H2O = linalool + diphosphate. It catalyses the reaction (2E,6E)-farnesyl diphosphate + H2O = (6E)-nerolidol + diphosphate. In terms of biological role, terpene synthase that shows monoterpene synthase activity and produces linalool, using geranyl diphosphate (GPP) as substrate. Also shows sesquiterpene synthase activity as it is able to convert farnesyl diphosphate (FPP) into (E)-nerolidol. This Melampsora lini (Rust fungus) protein is IDS-like terpene synthase 1.